A 531-amino-acid polypeptide reads, in one-letter code: MRFDVEEFKKRAREDFEHAWHEGPSVLTPAGVSGRYPRLRYTRATPHPIFEIVQRLRETYLAMGFDEAMNPLIVEESDIYRQFGPEAMAVLDRVFYLGGLPRPNVGIARKQLDEIEAILGRAVSPGTEEKLRETLHGYKKGTIDGDELTHELAAVLEADDAAVVHILDAVFPEFRELAPESSRNTLRSHMTSGWFLTLSSLWEKRHLPIRLFSVDRCFRREQEEGPTRLMAYHSASCVVAGEDVTLEEGKAISEALLSAFGFTEFRFQPDEKRSKYYMPETQTEVYARHPVLGWVEVATFGIYSPSALAEYGIGVPVMNLGLGVERLAMIAYQSNDIRQLTHPQFFPQEISDREVAGAVHLREEPRTVAGKRMAEAIRATAAEHATAPGPCAFTAWKGEIAGREVEVIVEEPESNTKLCGPACANEVFVHDGSVLGVPDIEKWATVRQEGVSTGITYLDAVSSLAAARIEEAARCGEEAHVQVKMSKLPSDVNLRIEEYAMRHITDHNKKVDLRGPVFLTVRSVIPEQPTR.

Residues 189–191, 234–236, 276–277, and Asn319 contribute to the substrate site; these read HMT, SAS, and YY.

Belongs to the class-II aminoacyl-tRNA synthetase family. O-phosphoseryl-tRNA(Cys) synthetase subfamily. In terms of assembly, homotetramer. Interacts with SepCysS.

The enzyme catalyses tRNA(Cys) + O-phospho-L-serine + ATP = O-phospho-L-seryl-tRNA(Cys) + AMP + diphosphate. Catalyzes the attachment of O-phosphoserine (Sep) to tRNA(Cys). The protein is O-phosphoserine--tRNA(Cys) ligase of Methanoculleus marisnigri (strain ATCC 35101 / DSM 1498 / JR1).